The sequence spans 106 residues: uncharacterized protein (106 aa).

Transmembrane regions (helical) follow at residues 4–24 (LPVVIISIVLFFVLFFGIGFL), 27–47 (MLLRMSWIMAVIYPIVCLFII), and 78–98 (VLILVSGLAGAIVSGIAINML).

The protein localises to the cell membrane. This is an uncharacterized protein from Bacillus subtilis (strain 168).